Consider the following 1035-residue polypeptide: Eukaryotic translation initiation factor 3 subunit A (1035 aa).

A coiled-coil region spans residues L92–A121. The PCI domain occupies M339–F523. A coiled-coil region spans residues E606–E910. Basic and acidic residues-rich tracts occupy residues T619 to R632 and K809 to L901. 2 disordered regions span residues T619–A649 and K809–Q1035. Low complexity-rich tracts occupy residues K943–A953 and P988–P1004.

It belongs to the eIF-3 subunit A family. In terms of assembly, component of the eukaryotic translation initiation factor 3 (eIF-3) complex.

The protein localises to the cytoplasm. In terms of biological role, RNA-binding component of the eukaryotic translation initiation factor 3 (eIF-3) complex, which is involved in protein synthesis of a specialized repertoire of mRNAs and, together with other initiation factors, stimulates binding of mRNA and methionyl-tRNAi to the 40S ribosome. The eIF-3 complex specifically targets and initiates translation of a subset of mRNAs involved in cell proliferation. The polypeptide is Eukaryotic translation initiation factor 3 subunit A (tif32) (Emericella nidulans (strain FGSC A4 / ATCC 38163 / CBS 112.46 / NRRL 194 / M139) (Aspergillus nidulans)).